The following is a 361-amino-acid chain: DNA replication and repair protein RecF (361 aa).

G30–T37 contributes to the ATP binding site.

The protein belongs to the RecF family.

It localises to the cytoplasm. Its function is as follows. The RecF protein is involved in DNA metabolism; it is required for DNA replication and normal SOS inducibility. RecF binds preferentially to single-stranded, linear DNA. It also seems to bind ATP. The sequence is that of DNA replication and repair protein RecF from Clostridium botulinum (strain Eklund 17B / Type B).